Consider the following 426-residue polypeptide: Anhydromevalonate phosphate decarboxylase (426 aa).

Mn(2+)-binding residues include asparagine 148 and glutamate 211. Aspartate 255 serves as the catalytic Proton acceptor.

It belongs to the UbiD family. The cofactor is prenylated FMN. Mn(2+) serves as cofactor.

It catalyses the reaction (2E)-3-methyl-5-phosphooxypent-2-enoate + H(+) = isopentenyl phosphate + CO2. It functions in the pathway isoprenoid biosynthesis; isopentenyl diphosphate biosynthesis via mevalonate pathway. Its function is as follows. Catalyzes the conversion of trans-anhydromevalonate 5-phosphate (tAHMP) into isopentenyl phosphate. Involved in the archaeal mevalonate (MVA) pathway, which provides fundamental precursors for isoprenoid biosynthesis, such as isopentenyl diphosphate (IPP) and dimethylallyl diphosphate (DMAPP). In Archaeoglobus fulgidus (strain ATCC 49558 / DSM 4304 / JCM 9628 / NBRC 100126 / VC-16), this protein is Anhydromevalonate phosphate decarboxylase.